Reading from the N-terminus, the 110-residue chain is Protein NATD1 (110 aa).

The region spanning 19 to 109 (EHDRQRRQFS…PLPQYLERLQ (91 aa)) is the N-acetyltransferase domain.

The protein belongs to the NATD1 family. Expressed in the heart, testis, kidney and lung.

This chain is Protein NATD1 (Natd1), found in Mus musculus (Mouse).